Reading from the N-terminus, the 318-residue chain is 4-hydroxy-3-methylbut-2-enyl diphosphate reductase (318 aa).

Residue C12 participates in [4Fe-4S] cluster binding. (2E)-4-hydroxy-3-methylbut-2-enyl diphosphate is bound by residues H41 and H74. H41 and H74 together coordinate dimethylallyl diphosphate. Positions 41 and 74 each coordinate isopentenyl diphosphate. C96 serves as a coordination point for [4Fe-4S] cluster. H124 contacts (2E)-4-hydroxy-3-methylbut-2-enyl diphosphate. Dimethylallyl diphosphate is bound at residue H124. Isopentenyl diphosphate is bound at residue H124. The active-site Proton donor is the E126. T167 serves as a coordination point for (2E)-4-hydroxy-3-methylbut-2-enyl diphosphate. [4Fe-4S] cluster is bound at residue C197. (2E)-4-hydroxy-3-methylbut-2-enyl diphosphate-binding residues include S225, S226, N227, and S269. Residues S225, S226, N227, and S269 each contribute to the dimethylallyl diphosphate site. Residues S225, S226, N227, and S269 each coordinate isopentenyl diphosphate.

This sequence belongs to the IspH family. [4Fe-4S] cluster is required as a cofactor.

It catalyses the reaction isopentenyl diphosphate + 2 oxidized [2Fe-2S]-[ferredoxin] + H2O = (2E)-4-hydroxy-3-methylbut-2-enyl diphosphate + 2 reduced [2Fe-2S]-[ferredoxin] + 2 H(+). It carries out the reaction dimethylallyl diphosphate + 2 oxidized [2Fe-2S]-[ferredoxin] + H2O = (2E)-4-hydroxy-3-methylbut-2-enyl diphosphate + 2 reduced [2Fe-2S]-[ferredoxin] + 2 H(+). Its pathway is isoprenoid biosynthesis; dimethylallyl diphosphate biosynthesis; dimethylallyl diphosphate from (2E)-4-hydroxy-3-methylbutenyl diphosphate: step 1/1. It participates in isoprenoid biosynthesis; isopentenyl diphosphate biosynthesis via DXP pathway; isopentenyl diphosphate from 1-deoxy-D-xylulose 5-phosphate: step 6/6. Its function is as follows. Catalyzes the conversion of 1-hydroxy-2-methyl-2-(E)-butenyl 4-diphosphate (HMBPP) into a mixture of isopentenyl diphosphate (IPP) and dimethylallyl diphosphate (DMAPP). Acts in the terminal step of the DOXP/MEP pathway for isoprenoid precursor biosynthesis. The polypeptide is 4-hydroxy-3-methylbut-2-enyl diphosphate reductase (Francisella philomiragia subsp. philomiragia (strain ATCC 25017 / CCUG 19701 / FSC 153 / O#319-036)).